A 493-amino-acid chain; its full sequence is Probable malate:quinone oxidoreductase (493 aa).

Belongs to the MQO family. The cofactor is FAD.

It catalyses the reaction (S)-malate + a quinone = a quinol + oxaloacetate. Its pathway is carbohydrate metabolism; tricarboxylic acid cycle; oxaloacetate from (S)-malate (quinone route): step 1/1. This Mycobacterium marinum (strain ATCC BAA-535 / M) protein is Probable malate:quinone oxidoreductase.